The following is a 25-amino-acid chain: NU-conotoxin-Ltg1a (25 aa).

Post-translationally, contains 2 disulfide bonds. However, cysteine pairing is not critical for peptide binding to melanocortin receptors, since peptides with different pairings have similar potency at the receptors tested. Expressed by the venom duct.

The protein resides in the secreted. In terms of biological role, peptide with nanomolar affinity for human melanocortin receptors. The natural disulfide pairing being unknown, the activity of all three possible peptides (with the cysteine pairings 'bead (I-II, III-IV), 'globular' (I-III, II-IV), and 'ribbon' (I-IV, II-III)) have been tested. All three isomers show similar affinities on each human melanocortin subtype (MC1R (~500 nM), MC3R (~100 nM), MC4R (~50 nM), and MC5R (~50 nM)). The sequence is that of NU-conotoxin-Ltg1a from Conus litoglyphus (Lithograph cone).